The chain runs to 229 residues: MTTMAETQTWQTVLGEEKQEPYFQEILDFVKKERKAGKIIYPPQKDIFNALKLTPYEAIKVVILGQDPYHGPNQAHGLAFSVRPGVPAPPSLQNIFKELHADLGVSIPSHGFLEKWAKQGVLLLNAALTVEAGKPQSHANIGWHRFTDKVIESLNDHPEGIVFLLWGSYAQKKSQLITNLRHRILKAPHPSPLSAARGFLGCRHFSKANQLLHEMGRGEIDWALDEKVS.

Asp67 acts as the Proton acceptor in catalysis.

This sequence belongs to the uracil-DNA glycosylase (UDG) superfamily. UNG family.

Its subcellular location is the cytoplasm. The enzyme catalyses Hydrolyzes single-stranded DNA or mismatched double-stranded DNA and polynucleotides, releasing free uracil.. Excises uracil residues from the DNA which can arise as a result of misincorporation of dUMP residues by DNA polymerase or due to deamination of cytosine. The sequence is that of Uracil-DNA glycosylase from Coxiella burnetii (strain RSA 493 / Nine Mile phase I).